Here is a 346-residue protein sequence, read N- to C-terminus: Ferredoxin--NADP reductase 1 (346 aa).

FAD is bound by residues glutamate 37, lysine 45, tyrosine 49, isoleucine 89, proline 124, aspartate 287, and serine 328.

It belongs to the ferredoxin--NADP reductase type 2 family. In terms of assembly, homodimer. FAD is required as a cofactor.

The enzyme catalyses 2 reduced [2Fe-2S]-[ferredoxin] + NADP(+) + H(+) = 2 oxidized [2Fe-2S]-[ferredoxin] + NADPH. In Bacillus pumilus (strain SAFR-032), this protein is Ferredoxin--NADP reductase 1.